We begin with the raw amino-acid sequence, 317 residues long: Transaldolase 1 (317 aa).

K132 serves as the catalytic Schiff-base intermediate with substrate.

It belongs to the transaldolase family. Type 1 subfamily. As to quaternary structure, homodimer.

It is found in the cytoplasm. The enzyme catalyses D-sedoheptulose 7-phosphate + D-glyceraldehyde 3-phosphate = D-erythrose 4-phosphate + beta-D-fructose 6-phosphate. The protein operates within carbohydrate degradation; pentose phosphate pathway; D-glyceraldehyde 3-phosphate and beta-D-fructose 6-phosphate from D-ribose 5-phosphate and D-xylulose 5-phosphate (non-oxidative stage): step 2/3. Its function is as follows. Transaldolase is important for the balance of metabolites in the pentose-phosphate pathway. This chain is Transaldolase 1, found in Salmonella paratyphi A (strain ATCC 9150 / SARB42).